Reading from the N-terminus, the 425-residue chain is Cell adhesion molecule CEACAM16 (425 aa).

Residues 1 to 20 (MALTGYSWLLLSATFLNVGA) form the signal peptide. An N-linked (GlcNAc...) asparagine glycan is attached at N36. Ig-like C2-type domains follow at residues 133–218 (PTVL…INLT) and 223–309 (PERV…ASVV). C153 and C201 form a disulfide bridge. N216 is a glycosylation site (N-linked (GlcNAc...) asparagine). C252 and C293 are oxidised to a cystine. N394 is a glycosylation site (N-linked (GlcNAc...) asparagine).

It belongs to the immunoglobulin superfamily. CEA family. As to quaternary structure, homooligomer; can for homodimers and homotetramers. Interacts with TECTA and TECTB.

It is found in the secreted. Required for proper hearing, plays a role in maintaining the integrity of the tectorial membrane. The protein is Cell adhesion molecule CEACAM16 of Homo sapiens (Human).